Consider the following 218-residue polypeptide: Ribose-5-phosphate isomerase A (218 aa).

Residues 28-31 (TGST), 81-84 (DGAD), and 94-97 (KGGG) each bind substrate. Glu103 (proton acceptor) is an active-site residue. A substrate-binding site is contributed by Lys121.

Belongs to the ribose 5-phosphate isomerase family. As to quaternary structure, homodimer.

The catalysed reaction is aldehydo-D-ribose 5-phosphate = D-ribulose 5-phosphate. Its pathway is carbohydrate degradation; pentose phosphate pathway; D-ribose 5-phosphate from D-ribulose 5-phosphate (non-oxidative stage): step 1/1. Its function is as follows. Catalyzes the reversible conversion of ribose-5-phosphate to ribulose 5-phosphate. The chain is Ribose-5-phosphate isomerase A from Aliivibrio fischeri (strain ATCC 700601 / ES114) (Vibrio fischeri).